The sequence spans 595 residues: Glucans biosynthesis glucosyltransferase H (595 aa).

Transmembrane regions (helical) follow at residues Ala-13–Gln-35, Ser-50–Phe-72, Ile-365–Phe-387, Gly-414–Val-436, Val-449–Gln-471, and Leu-526–Ser-548.

The protein belongs to the glycosyltransferase 2 family. OpgH subfamily.

Its subcellular location is the cell inner membrane. It participates in glycan metabolism; osmoregulated periplasmic glucan (OPG) biosynthesis. Functionally, involved in the biosynthesis of osmoregulated periplasmic glucans (OPGs). The sequence is that of Glucans biosynthesis glucosyltransferase H (opgH) from Cereibacter sphaeroides (strain ATCC 17023 / DSM 158 / JCM 6121 / CCUG 31486 / LMG 2827 / NBRC 12203 / NCIMB 8253 / ATH 2.4.1.) (Rhodobacter sphaeroides).